A 29-amino-acid polypeptide reads, in one-letter code: Cycloviolacin-O16 (29 aa).

Residues 1 to 29 constitute a cross-link (cyclopeptide (Gly-Asn)); the sequence is GLPCGETCFTGKCYTPGCSCSYPICKKIN. 3 disulfide bridges follow: cysteine 4–cysteine 18, cysteine 8–cysteine 20, and cysteine 13–cysteine 25.

In terms of processing, this is a cyclic peptide.

Its function is as follows. Probably participates in a plant defense mechanism. This chain is Cycloviolacin-O16, found in Viola odorata (Sweet violet).